Reading from the N-terminus, the 305-residue chain is Ornithine carbamoyltransferase, catabolic (305 aa).

Residues 50 to 53 (STRT), Q77, R101, and 128 to 131 (HPLQ) contribute to the carbamoyl phosphate site. Residues N159, D223, and 227–228 (SM) each bind L-ornithine. Carbamoyl phosphate-binding positions include 263-264 (CL) and R291.

Belongs to the aspartate/ornithine carbamoyltransferase superfamily. OTCase family.

Its subcellular location is the cytoplasm. The enzyme catalyses carbamoyl phosphate + L-ornithine = L-citrulline + phosphate + H(+). The protein operates within amino-acid degradation; L-arginine degradation via ADI pathway; carbamoyl phosphate from L-arginine: step 2/2. Functionally, reversibly catalyzes the transfer of the carbamoyl group from carbamoyl phosphate (CP) to the N(epsilon) atom of ornithine (ORN) to produce L-citrulline. This is Ornithine carbamoyltransferase, catabolic from Thermoplasma volcanium (strain ATCC 51530 / DSM 4299 / JCM 9571 / NBRC 15438 / GSS1).